A 427-amino-acid chain; its full sequence is Acetylornithine aminotransferase, mitochondrial (427 aa).

Lys-279 is subject to N6-(pyridoxal phosphate)lysine.

This sequence belongs to the class-III pyridoxal-phosphate-dependent aminotransferase family. Pyridoxal 5'-phosphate serves as cofactor.

It localises to the mitochondrion matrix. The catalysed reaction is N(2)-acetyl-L-ornithine + 2-oxoglutarate = N-acetyl-L-glutamate 5-semialdehyde + L-glutamate. The protein operates within amino-acid biosynthesis; L-arginine biosynthesis; N(2)-acetyl-L-ornithine from L-glutamate: step 4/4. The polypeptide is Acetylornithine aminotransferase, mitochondrial (ARG8) (Candida glabrata (strain ATCC 2001 / BCRC 20586 / JCM 3761 / NBRC 0622 / NRRL Y-65 / CBS 138) (Yeast)).